Here is a 306-residue protein sequence, read N- to C-terminus: Dermonecrotic toxin LiSicTox-alphaIA1a (306 aa).

The N-terminal stretch at 1–18 is a signal peptide; sequence MLPYIVLVLGCWSVLSQA. Residues 19-26 constitute a propeptide that is removed on maturation; sequence AQTDDEER. The active site involves H38. Positions 58 and 60 each coordinate Mg(2+). The active-site Nucleophile is the H74. Cystine bridges form between C78-C84 and C80-C223. D118 is a binding site for Mg(2+).

It belongs to the arthropod phospholipase D family. Class II subfamily. Class IIa sub-subfamily. Mg(2+) serves as cofactor. In terms of tissue distribution, expressed by the venom gland.

It is found in the secreted. The enzyme catalyses an N-(acyl)-sphingosylphosphocholine = an N-(acyl)-sphingosyl-1,3-cyclic phosphate + choline. It catalyses the reaction an N-(acyl)-sphingosylphosphoethanolamine = an N-(acyl)-sphingosyl-1,3-cyclic phosphate + ethanolamine. The catalysed reaction is a 1-acyl-sn-glycero-3-phosphocholine = a 1-acyl-sn-glycero-2,3-cyclic phosphate + choline. It carries out the reaction a 1-acyl-sn-glycero-3-phosphoethanolamine = a 1-acyl-sn-glycero-2,3-cyclic phosphate + ethanolamine. The enzyme catalyses 1-hexadecanoyl-sn-glycero-3-phosphocholine = 1-hexadecanoyl-sn-glycero-2,3-cyclic phosphate + choline. Catalytic activity and hemolysis are inhibited by divalent ion chelators (1,10-phenanthroline, EDTA, and EGTA). Functionally, dermonecrotic toxins cleave the phosphodiester linkage between the phosphate and headgroup of certain phospholipids (sphingolipid and lysolipid substrates), forming an alcohol (often choline) and a cyclic phosphate. This toxin acts on sphingomyelin (SM) with high activity. It discriminate between the number of carbon atoms in the substrates, since it prefers SM with six carbons in the fatty acid chain (SM6:0) to other SMs (SM12:0 &gt; SM16:0 &gt; SM18:0 &gt; SM2:0 &gt; SM24:0). It also acts on lysophosphatidylcholine (LPC) (LPC16:0 = LPC12:0 &gt; LPC18:0), and lyso-platelet activating factor (LPAF, an alkyl-LPC) but not on phosphatidylcholine (PC). It may also act on ceramide phosphoethanolamine (CPE), lysophosphatidylcholine (LPC) and lysophosphatidylethanolamine (LPE), but not on lysophosphatidylserine (LPS), and lysophosphatidylglycerol (LPG). It acts by transphosphatidylation, releasing exclusively cyclic phosphate products as second products. In vivo, it induces dermonecrosis, vascular permeability, platelet aggregation, inflammatory response, edema and cytotoxicity against renal epithelial cells. It causes direct nephrotoxicity and is directly toxic to liver. It also induces hemolysis in a complement-dependent manner as well as in a complement-independent manner. The hemolysis provoked in a complement-independent manner is composed of several steps. The toxin binds to erythrocyte membranes, hydrolyzes membrane phospholipids (SM and LPC) thus generating metabolism products that cause hemolysis, probably by provoking an increase of calcium inside cells. The calcium influx is due to the opening of L-type calcium channels, since L-type calcium channel blockers inhibit calcium influx. Is lethal to mice when intraperitoneally injected. This chain is Dermonecrotic toxin LiSicTox-alphaIA1a, found in Loxosceles intermedia (Brown spider).